The following is a 305-amino-acid chain: UDP-3-O-acyl-N-acetylglucosamine deacetylase (305 aa).

Residues His79, His238, and Asp242 each contribute to the Zn(2+) site. His265 serves as the catalytic Proton donor.

Belongs to the LpxC family. Requires Zn(2+) as cofactor.

It carries out the reaction a UDP-3-O-[(3R)-3-hydroxyacyl]-N-acetyl-alpha-D-glucosamine + H2O = a UDP-3-O-[(3R)-3-hydroxyacyl]-alpha-D-glucosamine + acetate. Its pathway is glycolipid biosynthesis; lipid IV(A) biosynthesis; lipid IV(A) from (3R)-3-hydroxytetradecanoyl-[acyl-carrier-protein] and UDP-N-acetyl-alpha-D-glucosamine: step 2/6. Catalyzes the hydrolysis of UDP-3-O-myristoyl-N-acetylglucosamine to form UDP-3-O-myristoylglucosamine and acetate, the committed step in lipid A biosynthesis. This Enterobacter sp. (strain 638) protein is UDP-3-O-acyl-N-acetylglucosamine deacetylase.